The sequence spans 755 residues: Polycomb protein SUZ12 (755 aa).

Disordered stretches follow at residues K26–S79, N333–A377, and A392–R420. Positions K30–Q42 are enriched in low complexity. 2 stretches are compositionally biased toward polar residues: residues T43 to G57 and T349 to T359. The span at G411–R420 shows a compositional bias: basic and acidic residues. The C2H2-type zinc-finger motif lies at F436 to H458. Residues I580–S645 are polycomb protein VEFS-Box.

The protein belongs to the VEFS (VRN2-EMF2-FIS2-SU(Z)12) family. In terms of assembly, component of the polycomb repressive complex 2 (PRC2) that consists of four core subunits icluding EZH2, EED, SUZ12, and RBBP4, among which EZH2 is the catalytic subunit and which minimally requires EED and SUZ12 for catalysis.

Its subcellular location is the nucleus. Its function is as follows. Component of the of the Polycomb Repressive Complex 2 (PRC2), a histone H3 lysine methyltransferase responsible for generating mono-, di-, and tri-methylation on Lys27 (H3K27me1, H3K27me2 and H3K27me3). The tri-methylated form is known to be critical in gene repression, and its proper placement is essential in defining repression patterns during development. SUZ12 is not a catalytic subunit but is required for the complex regulation of histone H3 lysine methylation by EZH2. This Chaetomium thermophilum (strain DSM 1495 / CBS 144.50 / IMI 039719) (Thermochaetoides thermophila) protein is Polycomb protein SUZ12.